Reading from the N-terminus, the 2318-residue chain is Neurogenic locus notch homolog protein 3 (2318 aa).

Positions 1–14 (MGLGARGRRRRRRL) are enriched in basic residues. The interval 1–20 (MGLGARGRRRRRRLMALPPP) is disordered. The signal sequence occupies residues 1 to 39 (MGLGARGRRRRRRLMALPPPPPPMRALPLLLLLAGLGAA). EGF-like domains are found at residues 40-78 (APPC…ERCQ), 79-119 (LEDP…PDCS), and 120-157 (QPDP…QSCQ). The Extracellular portion of the chain corresponds to 40–1643 (APPCLDGSPC…PLEAPEQSVP (1604 aa)). Cystine bridges form between cysteine 43/cysteine 55, cysteine 49/cysteine 66, cysteine 68/cysteine 77, cysteine 83/cysteine 94, cysteine 88/cysteine 107, cysteine 109/cysteine 118, cysteine 124/cysteine 135, cysteine 129/cysteine 145, cysteine 147/cysteine 156, cysteine 163/cysteine 175, cysteine 169/cysteine 184, cysteine 186/cysteine 195, cysteine 202/cysteine 213, cysteine 207/cysteine 223, cysteine 225/cysteine 234, cysteine 241/cysteine 252, cysteine 246/cysteine 261, cysteine 263/cysteine 272, cysteine 279/cysteine 292, cysteine 286/cysteine 301, cysteine 303/cysteine 312, cysteine 319/cysteine 330, cysteine 324/cysteine 339, cysteine 341/cysteine 350, cysteine 356/cysteine 367, cysteine 361/cysteine 378, cysteine 380/cysteine 389, cysteine 396/cysteine 409, cysteine 403/cysteine 418, cysteine 420/cysteine 429, cysteine 436/cysteine 447, cysteine 441/cysteine 456, cysteine 458/cysteine 467, cysteine 474/cysteine 485, cysteine 479/cysteine 494, cysteine 496/cysteine 505, cysteine 512/cysteine 523, cysteine 517/cysteine 532, cysteine 534/cysteine 543, cysteine 550/cysteine 560, cysteine 555/cysteine 569, cysteine 571/cysteine 580, cysteine 587/cysteine 598, cysteine 592/cysteine 607, cysteine 609/cysteine 618, cysteine 625/cysteine 635, cysteine 630/cysteine 644, cysteine 646/cysteine 655, cysteine 662/cysteine 673, cysteine 667/cysteine 682, cysteine 684/cysteine 693, cysteine 700/cysteine 710, cysteine 705/cysteine 719, cysteine 721/cysteine 730, cysteine 739/cysteine 750, cysteine 744/cysteine 759, cysteine 761/cysteine 770, cysteine 776/cysteine 787, cysteine 781/cysteine 797, cysteine 799/cysteine 808, cysteine 815/cysteine 827, cysteine 821/cysteine 836, cysteine 838/cysteine 847, cysteine 854/cysteine 865, cysteine 859/cysteine 874, cysteine 876/cysteine 885, cysteine 892/cysteine 902, cysteine 897/cysteine 911, cysteine 913/cysteine 922, cysteine 929/cysteine 940, cysteine 934/cysteine 949, cysteine 951/cysteine 960, cysteine 967/cysteine 978, cysteine 972/cysteine 987, cysteine 989/cysteine 998, cysteine 1005/cysteine 1016, cysteine 1010/cysteine 1023, cysteine 1025/cysteine 1034, cysteine 1041/cysteine 1062, cysteine 1056/cysteine 1071, cysteine 1073/cysteine 1082, cysteine 1089/cysteine 1100, cysteine 1094/cysteine 1109, cysteine 1111/cysteine 1120, cysteine 1127/cysteine 1138, cysteine 1132/cysteine 1147, cysteine 1149/cysteine 1158, cysteine 1165/cysteine 1183, cysteine 1177/cysteine 1192, cysteine 1194/cysteine 1203, cysteine 1210/cysteine 1223, cysteine 1215/cysteine 1233, cysteine 1235/cysteine 1244, cysteine 1251/cysteine 1262, cysteine 1256/cysteine 1276, cysteine 1278/cysteine 1287, cysteine 1294/cysteine 1305, cysteine 1299/cysteine 1314, and cysteine 1316/cysteine 1325. The region spanning 159–196 (DIDECRSGTTCRHGGTCLNTPGSFRCQCPLGYTGLLCE) is the EGF-like 4; calcium-binding domain. Residues 198 to 235 (PVVPCAPSPCRNGGTCRQSSDVTYDCACLPGFEGQNCE) enclose the EGF-like 5 domain. The EGF-like 6; calcium-binding domain occupies 237-273 (NVDDCPGHRCLNGGTCVDGVNTYNCQCPPEWTGQFCT). The EGF-like 7 domain occupies 275–313 (DVDECQLQPNACHNGGTCFNLLGGHSCVCVNGWTGESCS). Residues 315–351 (NIDDCATAVCFHGATCHDRVASFYCACPMGKTGLLCH) form the EGF-like 8; calcium-binding domain. Residues 352–390 (LDDACVSNPCHEDAICDTNPVSGRAICTCPPGFTGGACD) enclose the EGF-like 9 domain. An EGF-like 10; calcium-binding domain is found at 392–430 (DVDECSIGANPCEHLGRCVNTQGSFLCQCGRGYTGPRCE). The EGF-like 11; calcium-binding domain maps to 432-468 (DVNECLSGPCRNQATCLDRIGQFTCICMAGFTGTYCE). The 37-residue stretch at 470 to 506 (DIDECQSSPCVNGGVCKDRVNGFSCTCPSGFSGSMCQ) folds into the EGF-like 12; calcium-binding domain. The 37-residue stretch at 508 to 544 (DVDECASTPCRNGAKCVDQPDGYECRCAEGFEGTLCE) folds into the EGF-like 13; calcium-binding domain. The EGF-like 14; calcium-binding domain maps to 546–581 (NVDDCSPDPCHHGRCVDGIASFSCACAPGYTGIRCE). One can recognise an EGF-like 15; calcium-binding domain in the interval 583-619 (QVDECRSQPCRYGGKCLDLVDKYLCRCPPGTTGVNCE). Residues 621–656 (NIDDCASNPCTFGVCRDGINRYDCVCQPGFTGPLCN) enclose the EGF-like 16; calcium-binding domain. The region spanning 658-694 (EINECASSPCGEGGSCVDGENGFHCLCPPGSLPPLCL) is the EGF-like 17; calcium-binding domain. 3 consecutive EGF-like domains span residues 696-731 (ANHP…PRCS), 735-771 (APDA…HQCE), and 772-809 (VLSP…PRCQ). One can recognise an EGF-like 21; calcium-binding domain in the interval 811-848 (DVDECAGASPCGPHGTCTNLPGNFRCICHRGYTGPFCD). The 37-residue stretch at 850 to 886 (DIDDCDPNPCLHGGSCQDGVGSFSCSCLDGFAGPRCA) folds into the EGF-like 22; calcium-binding domain. The EGF-like 23; calcium-binding domain occupies 888-923 (DVDECLSSPCGPGTCTDHVASFTCACPPGYGGFHCE). EGF-like domains follow at residues 925 to 961 (DLPD…THCQ), 963 to 999 (EADP…SQCQ), 1001 to 1035 (PVDW…RLCD), 1037 to 1083 (QSLP…SHCE), and 1085 to 1121 (EVDP…DSCE). The EGF-like 29; calcium-binding domain occupies 1123–1159 (NIDECASQPCQNGGSCIDLVARYLCSCPPGTLGVLCE). Positions 1161–1204 (NEDDCDLGPSLDSGVQCLHNGTCVDLVGGFRCNCPPGYTGLHCE) constitute an EGF-like 30; calcium-binding domain. Asparagine 1180 is a glycosylation site (N-linked (GlcNAc...) asparagine). EGF-like domains lie at 1206–1245 (DINE…PRCQ), 1247–1288 (ALSP…LRCE), 1290–1326 (VARS…PSCR), and 1336–1374 (TNAS…PRCE). Asparagine 1337 carries an N-linked (GlcNAc...) asparagine glycan. 12 disulfide bridges follow: cysteine 1340-cysteine 1351, cysteine 1345-cysteine 1362, cysteine 1364-cysteine 1373, cysteine 1388-cysteine 1411, cysteine 1393-cysteine 1406, cysteine 1402-cysteine 1418, cysteine 1429-cysteine 1452, cysteine 1434-cysteine 1447, cysteine 1443-cysteine 1459, cysteine 1468-cysteine 1494, cysteine 1476-cysteine 1489, and cysteine 1485-cysteine 1501. LNR repeat units lie at residues 1388-1428 (CPRA…PWRQ), 1429-1466 (CEAL…GRDR), and 1468-1506 (CNPV…SEVP). N-linked (GlcNAc...) asparagine glycosylation occurs at asparagine 1439. The helical transmembrane segment at 1644-1664 (LLPLLVAGAVFLLIIFILGVM) threads the bilayer. Topologically, residues 1665–2318 (VARRKREHST…EVTPKRQVMA (654 aa)) are cytoplasmic. ANK repeat units lie at residues 1839–1868 (TGET…DTNA), 1872–1902 (SGRT…DLDA), 1906–1935 (DGST…DVNA), 1939–1968 (LGKS…NKDM), and 1972–2001 (KEET…NREI). Disordered stretches follow at residues 2025-2045 (LDQP…PLLC) and 2058-2126 (QSGT…PLEG). Positions 2028 to 2045 (PSGPRSPSGPHGLGPLLC) are enriched in low complexity. Arginine 2174 carries the omega-N-methylarginine modification. Over residues 2184-2193 (SFLLPLAPGP) the composition is skewed to low complexity. The interval 2184–2318 (SFLLPLAPGP…EVTPKRQVMA (135 aa)) is disordered. The PEST-like stretch occupies residues 2242-2261 (HPYLTPSPESPEHWASPSPP). Low complexity predominate over residues 2262–2282 (SLSDWSDSTPSPATATNATAS). Polar residues predominate over residues 2296–2305 (SLPQSQTQLG).

Belongs to the NOTCH family. Interacts with PSMA1. Heterodimer of a C-terminal fragment N(TM) and a N-terminal fragment N(EC) which are probably linked by disulfide bonds. Interacts with MAML1, MAML2 and MAML3 which act as transcriptional coactivators for NOTCH3. Interacts with HIF1AN. Post-translationally, synthesized in the endoplasmic reticulum as an inactive form which is proteolytically cleaved by a furin-like convertase in the trans-Golgi network before it reaches the plasma membrane to yield an active, ligand-accessible form. Cleavage results in a C-terminal fragment N(TM) and a N-terminal fragment N(EC). Following ligand binding, it is cleaved by TNF-alpha converting enzyme (TACE) to yield a membrane-associated intermediate fragment called notch extracellular truncation (NEXT). This fragment is then cleaved by presenilin dependent gamma-secretase to release a notch-derived peptide containing the intracellular domain (NICD) from the membrane. In terms of processing, phosphorylated. Hydroxylated by HIF1AN. Proliferating neuroepithelium.

It is found in the cell membrane. The protein resides in the nucleus. Functions as a receptor for membrane-bound ligands Jagged1, Jagged2 and Delta1 to regulate cell-fate determination. Upon ligand activation through the released notch intracellular domain (NICD) it forms a transcriptional activator complex with RBPJ/RBPSUH and activates genes of the enhancer of split locus. Affects the implementation of differentiation, proliferation and apoptotic programs. May play a role during CNS development. This is Neurogenic locus notch homolog protein 3 (Notch3) from Mus musculus (Mouse).